Consider the following 381-residue polypeptide: 40-kDa huntingtin-associated protein (381 aa).

Ala2 is subject to N-acetylalanine. A Nuclear localization signal motif is present at residues 34 to 36 (KKR). Residues 213 to 260 (EHGGHPVQQPELPQQLPSVPQPSLPGPQPRPVLGSTLPLPLPPDHAPG) are disordered. The segment covering 218-230 (PVQQPELPQQLPS) has biased composition (low complexity). Over residues 231–242 (VPQPSLPGPQPR) the composition is skewed to pro residues.

Interacts with HTT (via C-terminus). Interacts with RAB5A. Found in a complex with F8A1/F8A2/F8A3, HTT and RAB5A; mediates the recruitment of HTT by RAB5A onto early endosomes.

The protein localises to the cytoplasm. It is found in the nucleus. It localises to the early endosome. Its subcellular location is the nuclear body. In terms of biological role, RAB5A effector molecule that is involved in vesicular trafficking of early endosomes. Mediates the recruitment of HTT by RAB5A onto early endosomes. The HTT-F8A1/F8A2/F8A3-RAB5A complex stimulates early endosomal interaction with actin filaments and inhibits interaction with microtubules, leading to the reduction of endosome motility. The chain is 40-kDa huntingtin-associated protein (F8a1) from Rattus norvegicus (Rat).